Here is a 199-residue protein sequence, read N- to C-terminus: UPF0462 protein C4orf33 homolog (199 aa).

It belongs to the UPF0462 family.

The polypeptide is UPF0462 protein C4orf33 homolog (Rattus norvegicus (Rat)).